Here is a 527-residue protein sequence, read N- to C-terminus: tRNA pseudouridine synthase Pus10 (527 aa).

Residues cysteine 21 and cysteine 24 each contribute to the Zn(2+) site. The stretch at 42–87 (KELLNELQKFLEPEKPELILEAPNPPLKKIRLHEDGIDNLSEDGKE) forms a coiled coil. Residue serine 82 is modified to Phosphoserine. The Zn(2+) site is built by cysteine 107 and cysteine 110. The interval 302 to 315 (TPWIIDGERKMESS) is RNA binding forefinger loop. Aspartate 342 functions as the Nucleophile in the catalytic mechanism. The tract at residues 440 to 455 (QKTPLRVLHRRPLAVR) is RNA binding thumb loop.

The protein belongs to the pseudouridine synthase Pus10 family. Interacts with components of the microprocessor complex DROSHA and DGCR8. Post-translationally, proteolytically cleaved during TRAIL-induced cell death. Cleaved, in vitro, either by caspase-3 (CASP3) or caspase-8 (CASP8).

The protein localises to the nucleus. The protein resides in the cytoplasm. Its subcellular location is the mitochondrion. It carries out the reaction uridine(55) in tRNA = pseudouridine(55) in tRNA. The catalysed reaction is uridine(54) in tRNA = pseudouridine(54) in tRNA. In terms of biological role, protein with different functions depending on its subcellular location: involved in miRNA processing in the nucleus and acts as a tRNA pseudouridylate synthase in the cytoplasm. In the cytoplasm, acts as a pseudouridylate synthase by catalyzing synthesis of pseudouridine(54) and pseudouridine(55) from uracil-54 and uracil-55, respectively, in the psi GC loop of a subset of tRNAs. tRNA pseudouridylate synthase activity is enhanced by the presence of 1-methyladenosine at position 53-61 of tRNAs. Does not show tRNA pseudouridylate synthase activity in the nucleus. In the nucleus, promotes primary microRNAs (pri-miRNAs) processing independently of its RNA pseudouridylate synthase activity. Binds pri-miRNAs. Modulator of TRAIL/TNFSF10-induced cell death via activation of procaspase-8 and BID cleavage. Required for the progression of the apoptotic signal through intrinsic mitochondrial cell death. This chain is tRNA pseudouridine synthase Pus10, found in Mus musculus (Mouse).